A 508-amino-acid chain; its full sequence is WD repeat-containing protein DDB_G0290555 (508 aa).

4 WD repeats span residues 32 to 74 (TSEL…LIGE), 159 to 198 (NVATNLSGFAMNPSNDKFAFGGKDVNLTIWDLEKQVKTYS), 252 to 292 (FSKH…QVGS), and 295 to 334 (DSAGSVKDIAIHPTLPLLATVGLDRHLRVYNLDNRKMLHK). Residues 368-508 (ENKNRINNDD…KKFAGLKKRK (141 aa)) are disordered. Positions 399 to 435 (MDSDDDIEDGDDNDVEFPMEADSDDSDFDLGNSDDDN) are enriched in acidic residues. The span at 436 to 446 (ISVKKENKGDS) shows a compositional bias: basic and acidic residues. Positions 447-456 (DDSDDDSDED) are enriched in acidic residues. Residues 471 to 493 (NNNNNNNKGKNNKGKNNSSTKKT) show a composition bias toward low complexity. Residues 497 to 508 (LKKKFAGLKKRK) show a composition bias toward basic residues.

The polypeptide is WD repeat-containing protein DDB_G0290555 (Dictyostelium discoideum (Social amoeba)).